Reading from the N-terminus, the 505-residue chain is Apolipoprotein N-acyltransferase (505 aa).

The next 6 membrane-spanning stretches (helical) occupy residues 23-43 (LLAL…AVLY), 58-78 (GWWF…VSMN), 85-105 (PLLA…FFAL), 125-145 (LCFA…LTGF), 162-182 (LAPL…AALL), and 192-212 (PSFL…GLAL). Positions 230-469 (IQGNVEQDLK…QAVLYGEVVP (240 aa)) constitute a CN hydrolase domain. The active-site Proton acceptor is the Glu269. Lys329 is a catalytic residue. The active-site Nucleophile is the Cys381. The helical transmembrane segment at 482-502 (WPLAIVCALLLGWALLAGRIA) threads the bilayer.

This sequence belongs to the CN hydrolase family. Apolipoprotein N-acyltransferase subfamily.

Its subcellular location is the cell inner membrane. It carries out the reaction N-terminal S-1,2-diacyl-sn-glyceryl-L-cysteinyl-[lipoprotein] + a glycerophospholipid = N-acyl-S-1,2-diacyl-sn-glyceryl-L-cysteinyl-[lipoprotein] + a 2-acyl-sn-glycero-3-phospholipid + H(+). The protein operates within protein modification; lipoprotein biosynthesis (N-acyl transfer). Functionally, catalyzes the phospholipid dependent N-acylation of the N-terminal cysteine of apolipoprotein, the last step in lipoprotein maturation. This chain is Apolipoprotein N-acyltransferase, found in Pseudomonas putida (strain ATCC 47054 / DSM 6125 / CFBP 8728 / NCIMB 11950 / KT2440).